A 227-amino-acid polypeptide reads, in one-letter code: Cytochrome c oxidase subunit 2 (227 aa).

The Mitochondrial intermembrane segment spans residues 1–14 (MAYPFQLGLQDATS). The chain crosses the membrane as a helical span at residues 15–45 (PIMEELMNFHDHTLMIVFLISSLVLYIISLM). Over 46–59 (LTTKLTHTSTMDAQ) the chain is Mitochondrial matrix. A helical transmembrane segment spans residues 60 to 87 (EVETIWTILPAAILILIALPSLRILYMM). The Mitochondrial intermembrane portion of the chain corresponds to 88-227 (DEINNPVLTV…YFENWSASMI (140 aa)). His-161, Cys-196, Glu-198, Cys-200, His-204, and Met-207 together coordinate Cu cation. Residue Glu-198 participates in Mg(2+) binding. At Tyr-218 the chain carries Phosphotyrosine.

Belongs to the cytochrome c oxidase subunit 2 family. In terms of assembly, component of the cytochrome c oxidase (complex IV, CIV), a multisubunit enzyme composed of 14 subunits. The complex is composed of a catalytic core of 3 subunits MT-CO1, MT-CO2 and MT-CO3, encoded in the mitochondrial DNA, and 11 supernumerary subunits COX4I, COX5A, COX5B, COX6A, COX6B, COX6C, COX7A, COX7B, COX7C, COX8 and NDUFA4, which are encoded in the nuclear genome. The complex exists as a monomer or a dimer and forms supercomplexes (SCs) in the inner mitochondrial membrane with NADH-ubiquinone oxidoreductase (complex I, CI) and ubiquinol-cytochrome c oxidoreductase (cytochrome b-c1 complex, complex III, CIII), resulting in different assemblies (supercomplex SCI(1)III(2)IV(1) and megacomplex MCI(2)III(2)IV(2)). Found in a complex with TMEM177, COA6, COX18, COX20, SCO1 and SCO2. Interacts with TMEM177 in a COX20-dependent manner. Interacts with COX20. Interacts with COX16. The cofactor is Cu cation.

It is found in the mitochondrion inner membrane. It carries out the reaction 4 Fe(II)-[cytochrome c] + O2 + 8 H(+)(in) = 4 Fe(III)-[cytochrome c] + 2 H2O + 4 H(+)(out). Its function is as follows. Component of the cytochrome c oxidase, the last enzyme in the mitochondrial electron transport chain which drives oxidative phosphorylation. The respiratory chain contains 3 multisubunit complexes succinate dehydrogenase (complex II, CII), ubiquinol-cytochrome c oxidoreductase (cytochrome b-c1 complex, complex III, CIII) and cytochrome c oxidase (complex IV, CIV), that cooperate to transfer electrons derived from NADH and succinate to molecular oxygen, creating an electrochemical gradient over the inner membrane that drives transmembrane transport and the ATP synthase. Cytochrome c oxidase is the component of the respiratory chain that catalyzes the reduction of oxygen to water. Electrons originating from reduced cytochrome c in the intermembrane space (IMS) are transferred via the dinuclear copper A center (CU(A)) of subunit 2 and heme A of subunit 1 to the active site in subunit 1, a binuclear center (BNC) formed by heme A3 and copper B (CU(B)). The BNC reduces molecular oxygen to 2 water molecules using 4 electrons from cytochrome c in the IMS and 4 protons from the mitochondrial matrix. The sequence is that of Cytochrome c oxidase subunit 2 (MT-CO2) from Praomys tullbergi (Tullberg's soft-furred rat).